Here is a 323-residue protein sequence, read N- to C-terminus: Cysteine synthase A (323 aa).

2 residues coordinate hydrogen sulfide: Asn8 and Arg35. Lys42 is modified (N6-(pyridoxal phosphate)lysine). Residues Asn72 and Gly177–Thr181 contribute to the pyridoxal 5'-phosphate site. A hydrogen sulfide-binding site is contributed by Leu269. Residue Ser273 participates in pyridoxal 5'-phosphate binding.

The protein belongs to the cysteine synthase/cystathionine beta-synthase family. Homodimer. The cofactor is pyridoxal 5'-phosphate.

It carries out the reaction O-acetyl-L-serine + hydrogen sulfide = L-cysteine + acetate. It participates in amino-acid biosynthesis; L-cysteine biosynthesis; L-cysteine from L-serine: step 2/2. Its function is as follows. Two cysteine synthase enzymes are found. Both catalyze the same reaction. Cysteine synthase B can also use thiosulfate in place of sulfide to give cysteine thiosulfonate as a product. The sequence is that of Cysteine synthase A (cysK) from Salmonella typhi.